We begin with the raw amino-acid sequence, 900 residues long: Alanine--tRNA ligase (900 aa).

His-568, His-572, Cys-672, and His-676 together coordinate Zn(2+).

Belongs to the class-II aminoacyl-tRNA synthetase family. The cofactor is Zn(2+).

The protein resides in the cytoplasm. The catalysed reaction is tRNA(Ala) + L-alanine + ATP = L-alanyl-tRNA(Ala) + AMP + diphosphate. In terms of biological role, catalyzes the attachment of alanine to tRNA(Ala) in a two-step reaction: alanine is first activated by ATP to form Ala-AMP and then transferred to the acceptor end of tRNA(Ala). Also edits incorrectly charged Ser-tRNA(Ala) and Gly-tRNA(Ala) via its editing domain. The polypeptide is Alanine--tRNA ligase (Mycoplasma genitalium (strain ATCC 33530 / DSM 19775 / NCTC 10195 / G37) (Mycoplasmoides genitalium)).